Reading from the N-terminus, the 238-residue chain is C-reactive protein (238 aa).

A signal peptide spans 1–16; it reads MERFALWFIFLAGSLA. At Gln17 the chain carries Pyrrolidone carboxylic acid. The Pentraxin (PTX) domain maps to 21 to 223; it reads VGNVFLFPKP…QATTQPKRQC (203 aa). Cys52 and Cys113 are disulfide-bonded. Asp76, Asn77, Glu154, Gln155, Asp156, and Gln166 together coordinate Ca(2+).

This sequence belongs to the pentraxin family. Homodimer; disulfide-linked. It is not known if it assembles into a pentraxin (or pentaxin) structure. Pentaxins have a discoid arrangement of 5 non-covalently bound subunits. It depends on Ca(2+) as a cofactor. In terms of processing, cys-89 or Cys-223 or Cys-236 could be involved in interchain disulfide linkage.

Its subcellular location is the secreted. Its function is as follows. Displays several functions associated with host defense: it promotes agglutination, bacterial capsular swelling, phagocytosis, and complement fixation through its calcium-dependent binding to phosphorylcholine. This chain is C-reactive protein (crp), found in Xenopus laevis (African clawed frog).